We begin with the raw amino-acid sequence, 481 residues long: Extracellular exo-alpha-(1-&gt;5)-L-arabinofuranosidase (481 aa).

The signal sequence occupies residues 1–27 (MRRLTVRLFTAVLAALALLTMGTPAHA). The catalytic stretch occupies residues 37-336 (FTNPLAEKRA…KVYWNADGTP (300 aa)). The active-site Proton acceptor is the aspartate 47. Asparagine 186 serves as a coordination point for substrate. Residue glutamate 223 is the Proton donor of the active site. Residues histidine 287, arginine 321, 363-366 (HWDF), aspartate 379, 457-460 (HYEN), and aspartate 475 contribute to the substrate site. Residues 349–479 (VRFSSYNYPD…ALDRQDATFY (131 aa)) are ABD.

Belongs to the glycosyl hydrolase 43 family.

The protein localises to the secreted. The catalysed reaction is Hydrolysis of terminal non-reducing alpha-L-arabinofuranoside residues in alpha-L-arabinosides.. Its pathway is glycan metabolism; L-arabinan degradation. Functionally, involved in the degradation of arabinan and is a key enzyme in the complete degradation of the plant cell wall. Catalyzes only the cleavage of terminal alpha-(1-&gt;5) arabinofuranosyl bonds of arabinan present in the arabinofuranosyl polysaccharides or oligosaccharides. It cannot act on other arabinose-containing polysaccharides and arabinoxylo-oligosaccharides. The chain is Extracellular exo-alpha-(1-&gt;5)-L-arabinofuranosidase from Streptomyces avermitilis (strain ATCC 31267 / DSM 46492 / JCM 5070 / NBRC 14893 / NCIMB 12804 / NRRL 8165 / MA-4680).